A 163-amino-acid polypeptide reads, in one-letter code: Cyclic pyranopterin monophosphate synthase (163 aa).

Substrate-binding positions include 79–81 (LCH) and 117–118 (ME). The active site involves D132.

Belongs to the MoaC family. Homohexamer; trimer of dimers.

It catalyses the reaction (8S)-3',8-cyclo-7,8-dihydroguanosine 5'-triphosphate = cyclic pyranopterin phosphate + diphosphate. It participates in cofactor biosynthesis; molybdopterin biosynthesis. In terms of biological role, catalyzes the conversion of (8S)-3',8-cyclo-7,8-dihydroguanosine 5'-triphosphate to cyclic pyranopterin monophosphate (cPMP). The chain is Cyclic pyranopterin monophosphate synthase from Chloroflexus aurantiacus (strain ATCC 29366 / DSM 635 / J-10-fl).